A 279-amino-acid chain; its full sequence is MTNIHPTAIIEPGAKIGKNVVIEPYVVIKSTVTLCDDVVVKSYAYIDGHTTIGKGTTIWPSAMIGNKPQDLKYQGEKTYVTIGENCEIREFAIITSSTFEGTTVSIGNNCLIMPWAHVAHNCTIGNYVILSNHAQLAGHVVVEDYAIIGGMVGVHQFVRIGAHAMVGALSGIRRDVPPYTIGTGNPYQLGGINKVGLQRRQVPFETRLALIKVFKKVYRSEDSFSESLLEAQEEYGHIPEVQNFIHFCQNPSKRGIERGADKDALQDESVEKEGALVES.

The tract at residues 256 to 279 (IERGADKDALQDESVEKEGALVES) is disordered.

It belongs to the transferase hexapeptide repeat family. LpxA subfamily. Homotrimer.

It localises to the cytoplasm. It carries out the reaction a (3R)-hydroxyacyl-[ACP] + UDP-N-acetyl-alpha-D-glucosamine = a UDP-3-O-[(3R)-3-hydroxyacyl]-N-acetyl-alpha-D-glucosamine + holo-[ACP]. The protein operates within glycolipid biosynthesis; lipid IV(A) biosynthesis; lipid IV(A) from (3R)-3-hydroxytetradecanoyl-[acyl-carrier-protein] and UDP-N-acetyl-alpha-D-glucosamine: step 1/6. Functionally, involved in the biosynthesis of lipid A, a phosphorylated glycolipid that anchors the lipopolysaccharide to the outer membrane of the cell. The polypeptide is Acyl-[acyl-carrier-protein]--UDP-N-acetylglucosamine O-acyltransferase (Chlamydia caviae (strain ATCC VR-813 / DSM 19441 / 03DC25 / GPIC) (Chlamydophila caviae)).